Consider the following 63-residue polypeptide: U-reduvitoxin-Pr4a (63 aa).

The signal sequence occupies residues 1-19 (MKIFGLFLLIATYMALAFA). 3 disulfide bridges follow: cysteine 24-cysteine 40, cysteine 31-cysteine 45, and cysteine 39-cysteine 52.

It belongs to the venom Ptu1-like knottin family. As to expression, expressed by the venom gland.

It is found in the secreted. Its function is as follows. Binds reversibly and blocks P/Q-type voltage-gated calcium channels (Cav). This is U-reduvitoxin-Pr4a from Platymeris rhadamanthus (Red spot assassin bug).